Reading from the N-terminus, the 748-residue chain is Formate acetyltransferase (748 aa).

A PFL domain is found at 5 to 618; it reads NNHTNAWQGF…KTGNTPDGRK (614 aa). Cysteine 412 functions as the S-acetylcysteine intermediate in the catalytic mechanism. Cysteine 413 serves as the catalytic Cysteine radical intermediate. A Glycine radical domain is found at 625 to 748; it reads PGANPMHGRD…VISRTFHESM (124 aa). Glycine 723 carries the post-translational modification Glycine radical.

The protein belongs to the glycyl radical enzyme (GRE) family. PFL subfamily. In terms of assembly, homodimer.

The protein localises to the cytoplasm. The catalysed reaction is formate + acetyl-CoA = pyruvate + CoA. It participates in fermentation; pyruvate fermentation; formate from pyruvate: step 1/1. Catalyzes the conversion of pyruvate to formate and acetyl-CoA. The sequence is that of Formate acetyltransferase (pflB) from Staphylococcus epidermidis (strain ATCC 35984 / DSM 28319 / BCRC 17069 / CCUG 31568 / BM 3577 / RP62A).